We begin with the raw amino-acid sequence, 927 residues long: Autophagy-related protein 13 (927 aa).

Disordered stretches follow at residues 1–66 (MHQQ…PPAD), 334–359 (SLPQ…RSKP), 388–559 (LRSV…AQPG), 628–716 (TESM…TIRE), and 786–927 (QMQL…RRGW). Over residues 14–30 (PGATTQPNLPSRSNSTR) the composition is skewed to polar residues. Polar residues-rich tracts occupy residues 393–402 (QPGSDTSSPP), 513–523 (PASTSRYSSSF), and 544–557 (GSSG…SVAQ). Positions 630 to 671 (SMTSSVQMQRSSSSSSRQLTSVPGMTAPASVSASSSPGKPLS) are enriched in low complexity. Residues 684-716 (LSENSIIDYSGQGRITSRQGRTSDNTQPGTIRE) show a composition bias toward polar residues. Residues 793–803 (STQRPSDRLEP) are compositionally biased toward basic and acidic residues. Positions 850-868 (HKQTPPQSSRGSFNGSLNR) are enriched in polar residues. Basic and acidic residues predominate over residues 891-901 (PQGRRSIEEAR).

Belongs to the ATG13 family. Fungi subfamily. As to quaternary structure, hypophosphorylated form interacts with ATG1 to form the ATG1-ATG13 kinase complex. The ATG1-ATG13 complex interacts with the ATG17-ATG29-ATG31 complex through direct interaction with ATG17.

Its subcellular location is the cytoplasm. It localises to the preautophagosomal structure. Activates the ATG1 kinase in a nutritional condition dependent manner through the TOR pathway, leading to autophagy. Involved in ATG9 and ATG23 cycling through the pre-autophagosomal structure. Also involved in cytoplasm to vacuole transport (Cvt) and more specifically in Cvt vesicle formation. Seems to play a role in the switching machinery regulating the conversion between the Cvt pathway and autophagy. Finally, ATG13 is also required for glycogen storage during stationary phase. Autophagy is required for proper vegetative growth, asexual/sexual reproduction, and full virulence. Autophagy is particularly involved in the biosynthesis of deoxynivalenol (DON), an important virulence determinant. The sequence is that of Autophagy-related protein 13 from Gibberella zeae (strain ATCC MYA-4620 / CBS 123657 / FGSC 9075 / NRRL 31084 / PH-1) (Wheat head blight fungus).